The following is a 125-amino-acid chain: Small ribosomal subunit protein uS12 (125 aa).

The residue at position 89 (D89) is a 3-methylthioaspartic acid.

It belongs to the universal ribosomal protein uS12 family. In terms of assembly, part of the 30S ribosomal subunit. Contacts proteins S8 and S17. May interact with IF1 in the 30S initiation complex.

With S4 and S5 plays an important role in translational accuracy. Its function is as follows. Interacts with and stabilizes bases of the 16S rRNA that are involved in tRNA selection in the A site and with the mRNA backbone. Located at the interface of the 30S and 50S subunits, it traverses the body of the 30S subunit contacting proteins on the other side and probably holding the rRNA structure together. The combined cluster of proteins S8, S12 and S17 appears to hold together the shoulder and platform of the 30S subunit. The polypeptide is Small ribosomal subunit protein uS12 (Cupriavidus necator (strain ATCC 17699 / DSM 428 / KCTC 22496 / NCIMB 10442 / H16 / Stanier 337) (Ralstonia eutropha)).